The primary structure comprises 401 residues: S-adenosylmethionine synthase 1 (401 aa).

His15 is a binding site for ATP. Asp17 contributes to the Mg(2+) binding site. Glu43 is a K(+) binding site. L-methionine contacts are provided by Glu56 and Gln98. Residues 98–108 (QSPDIAQGVDK) form a flexible loop region. Residues 173–175 (DGK), 246–247 (RF), Asp255, 261–262 (RK), Ala278, and Lys282 each bind ATP. Asp255 contacts L-methionine. Lys286 lines the L-methionine pocket.

It belongs to the AdoMet synthase family. As to quaternary structure, homotetramer; dimer of dimers. It depends on Mg(2+) as a cofactor. K(+) is required as a cofactor.

Its subcellular location is the cytoplasm. It catalyses the reaction L-methionine + ATP + H2O = S-adenosyl-L-methionine + phosphate + diphosphate. The protein operates within amino-acid biosynthesis; S-adenosyl-L-methionine biosynthesis; S-adenosyl-L-methionine from L-methionine: step 1/1. Its function is as follows. Catalyzes the formation of S-adenosylmethionine (AdoMet) from methionine and ATP. The overall synthetic reaction is composed of two sequential steps, AdoMet formation and the subsequent tripolyphosphate hydrolysis which occurs prior to release of AdoMet from the enzyme. The polypeptide is S-adenosylmethionine synthase 1 (Frankia casuarinae (strain DSM 45818 / CECT 9043 / HFP020203 / CcI3)).